The chain runs to 87 residues: Small ribosomal subunit protein bS20 (87 aa).

Residues 1 to 15 (MANTRSAKKMVRKIA) are compositionally biased toward basic residues. Disordered regions lie at residues 1-22 (MANT…DVNK) and 64-87 (KGVT…KAMA).

It belongs to the bacterial ribosomal protein bS20 family.

Binds directly to 16S ribosomal RNA. The polypeptide is Small ribosomal subunit protein bS20 (Hyphomonas neptunium (strain ATCC 15444)).